A 2002-amino-acid polypeptide reads, in one-letter code: [F-actin]-monooxygenase MICAL3 (2002 aa).

Residues 2 to 494 (EERKHETMNP…RHLYDTGETK (493 aa)) form a monooxygenase domain region. FAD contacts are provided by residues C97, 116–118 (EKR), 123–125 (RNN), F183, Y298, and D398. Residues 518 to 624 (VARSSKLLGW…YLTQFYEMFK (107 aa)) enclose the Calponin-homology (CH) domain. A Phosphoserine modification is found at S649. The disordered stretch occupies residues 658-706 (GQTISRKRSPKDKKEKDLDGAGKRRKTSQSEEEEAPRGHRGERPTLVST). Positions 663 to 684 (RKRSPKDKKEKDLDGAGKRRKT) match the Nuclear localization signal motif. Basic and acidic residues predominate over residues 669–679 (DKKEKDLDGAG). A phosphoserine mark is found at S685 and S687. The region spanning 762 to 824 (DTCYFCQKRV…KPHYCYRLSG (63 aa)) is the LIM zinc-binding domain. Positions 764, 767, 785, 788, 791, 794, 814, and 817 each coordinate Zn(2+). The interval 835–883 (PLSGKEAKGPLQDGATTDANGRANAVASSTERTPGSGVNGLEEPSIAKR) is disordered. T887 carries the phosphothreonine modification. Disordered regions lie at residues 907–1313 (QEVP…SPLA), 1335–1776 (RRSL…GKHR), and 1791–1821 (LSFS…TYTE). The segment covering 938–950 (SEMEEEGEEEEEE) has biased composition (acidic residues). Residue S977 is modified to Phosphoserine. The span at 991 to 1017 (NEEEEEEEEEYEEEEEEDYDEEEEESS) shows a compositional bias: acidic residues. The span at 1041 to 1054 (HWTHIREREEEERM) shows a compositional bias: basic and acidic residues. Residues 1055–1066 (APASESSASGAP) are compositionally biased toward low complexity. Over residues 1068–1102 (DENDLEEDVDSEPAEIEGEAAEDGDPGDTGAELDD) the composition is skewed to acidic residues. S1134, S1143, S1160, and S1192 each carry phosphoserine. Positions 1150 to 1163 (GPSQATSPIRSPQE) are enriched in polar residues. A compositionally biased stretch (basic and acidic residues) spans 1191-1218 (KSPEERLFPEPLLPKEKPKADAPSDLKA). Positions 1239–1258 (PGSPQPQPPVAASTPPPSPL) are enriched in pro residues. Composition is skewed to polar residues over residues 1268–1280 (TEAT…QSPI) and 1288–1302 (KTST…QSQS). At S1274 the chain carries Phosphoserine. T1276 is subject to Phosphothreonine. S1278 bears the Phosphoserine mark. S1310 and S1337 each carry phosphoserine. T1341 is subject to Phosphothreonine. S1371 and S1384 each carry phosphoserine. A compositionally biased stretch (basic and acidic residues) spans 1407 to 1422 (PSDRELRSAQEERREL). The segment covering 1423–1435 (SSSSGLGLHGSSS) has biased composition (low complexity). A Phosphoserine modification is found at S1433. Positions 1436–1451 (NMKTLGSQSFNTSDSA) are enriched in polar residues. The residue at position 1454 (T1454) is a Phosphothreonine. Residues 1456 to 1467 (PSSPPPPPPPGE) show a composition bias toward pro residues. Residues 1516 to 1530 (SVEEIPFADDVEDTY) show a composition bias toward acidic residues. The span at 1588–1604 (EAKELAEERMRAREKSV) shows a compositional bias: basic and acidic residues. S1649 bears the Phosphoserine mark. Residue T1651 is modified to Phosphothreonine. The segment covering 1657–1668 (GSEEPTLKHEAT) has biased composition (basic and acidic residues). Low complexity predominate over residues 1674–1694 (SPPSDSGGPDGSFTSSEGSSG). Basic residues predominate over residues 1695–1713 (KSKKRSSLFSPRRNKKEKK). 2 positions are modified to phosphoserine: S1701 and S1704. The span at 1760–1769 (CPSTPSSGAT) shows a compositional bias: polar residues. Residues 1804–1820 (VLEKSSQKSRREPRTYT) are compositionally biased toward basic and acidic residues. The stretch at 1821-1992 (EEELNAKLTR…EEDKDLEAAM (172 aa)) forms a coiled coil. One can recognise a bMERB domain in the interval 1841 to 1990 (KQEELKRLHR…EREEDKDLEA (150 aa)). The residue at position 1912 (S1912) is a Phosphoserine.

The protein belongs to the Mical family. In terms of assembly, interacts with RAB1B, RAB8A, RAB10, RAB13 and RAB15 (in their GTP-bound forms); binding to RAB1B is of low affinity compared to other Rab proteins; at least in case of RAB8A can bind 2 molecules of RAB8A simultaneously through a high and a low affinity binding site, respectively. Interacts with ERC1 and RAB8A; may bridge ERC1 with RAB8A. Interacts with KIF23 and ERC1; enhances the interaction between KIF23 and ERC1. Interacts with NINL isoform 2. The cofactor is FAD. In terms of tissue distribution, ubiquitous.

The protein localises to the cytoplasm. The protein resides in the cell cortex. It localises to the cytoskeleton. It is found in the nucleus. Its subcellular location is the midbody. The protein localises to the spindle. The protein resides in the cilium basal body. It catalyses the reaction L-methionyl-[F-actin] + NADPH + O2 + H(+) = L-methionyl-(R)-S-oxide-[F-actin] + NADP(+) + H2O. Its function is as follows. Monooxygenase that promotes depolymerization of F-actin by mediating oxidation of specific methionine residues on actin to form methionine-sulfoxide, resulting in actin filament disassembly and preventing repolymerization. In the absence of actin, it also functions as a NADPH oxidase producing H(2)O(2). Seems to act as Rab effector protein and plays a role in vesicle trafficking. Involved in exocytic vesicles tethering and fusion: the monooxygenase activity is required for this process and implicates RAB8A associated with exocytotic vesicles. Required for cytokinesis. Contributes to stabilization and/or maturation of the intercellular bridge independently of its monooxygenase activity. Promotes recruitment of Rab8 and ERC1 to the intercellular bridge, and together these proteins are proposed to function in timely abscission. This chain is [F-actin]-monooxygenase MICAL3 (MICAL3), found in Homo sapiens (Human).